The chain runs to 496 residues: Amino-acid acetyltransferase, mitochondrial (496 aa).

One can recognise an N-acetyltransferase domain in the interval 333 to 493; sequence YHGTDCLTNG…LDVIDSIQPT (161 aa).

The protein belongs to the acetyltransferase family.

It localises to the mitochondrion. It carries out the reaction L-glutamate + acetyl-CoA = N-acetyl-L-glutamate + CoA + H(+). Its pathway is amino-acid biosynthesis; L-arginine biosynthesis; N(2)-acetyl-L-ornithine from L-glutamate: step 1/4. Its function is as follows. N-acetylglutamate synthase involved in arginine biosynthesis. The protein is Amino-acid acetyltransferase, mitochondrial (arg2) of Schizosaccharomyces japonicus (strain yFS275 / FY16936) (Fission yeast).